The following is a 122-amino-acid chain: Large ribosomal subunit protein uL18 (122 aa).

The protein belongs to the universal ribosomal protein uL18 family. Part of the 50S ribosomal subunit; part of the 5S rRNA/L5/L18/L25 subcomplex. Contacts the 5S and 23S rRNAs.

In terms of biological role, this is one of the proteins that bind and probably mediate the attachment of the 5S RNA into the large ribosomal subunit, where it forms part of the central protuberance. The sequence is that of Large ribosomal subunit protein uL18 from Mycobacterium tuberculosis (strain ATCC 25177 / H37Ra).